A 111-amino-acid chain; its full sequence is Large ribosomal subunit protein uL24 (111 aa).

Belongs to the universal ribosomal protein uL24 family. Part of the 50S ribosomal subunit.

In terms of biological role, one of two assembly initiator proteins, it binds directly to the 5'-end of the 23S rRNA, where it nucleates assembly of the 50S subunit. One of the proteins that surrounds the polypeptide exit tunnel on the outside of the subunit. The protein is Large ribosomal subunit protein uL24 of Chlamydia muridarum (strain MoPn / Nigg).